A 104-amino-acid chain; its full sequence is ATP-dependent Clp protease adapter protein ClpS (104 aa).

The protein belongs to the ClpS family. As to quaternary structure, binds to the N-terminal domain of the chaperone ClpA.

Its function is as follows. Involved in the modulation of the specificity of the ClpAP-mediated ATP-dependent protein degradation. This Paraburkholderia xenovorans (strain LB400) protein is ATP-dependent Clp protease adapter protein ClpS.